The sequence spans 345 residues: Platelet-derived growth factor C (345 aa).

The N-terminal stretch at 1–22 is a signal peptide; sequence MLLFGFLLLTFALVSQRQGAEA. 2 N-linked (GlcNAc...) asparagine glycosylation sites follow: N25 and N55. The CUB domain occupies 46-163; sequence HEKIITVSAN…PGFCIHYTLL (118 aa). Disulfide bonds link C104-C124, C250-C294, C280-C335, and C287-C337.

The protein belongs to the PDGF/VEGF growth factor family. Homodimer; disulfide-linked. Interacts with PDGFRA homodimers, and with heterodimers formed by PDGFRA and PDGFRB. In terms of processing, proteolytic removal of the N-terminal CUB domain releasing the core domain is necessary for unmasking the receptor-binding epitopes of the core domain. Cleavage after basic residues in the hinge region (region connecting the CUB and growth factor domains) gives rise to the receptor-binding form.

The protein localises to the secreted. Functionally, growth factor that plays an essential role in the regulation of embryonic development, cell proliferation, cell migration, survival and chemotaxis. Potent mitogen and chemoattractant for cells of mesenchymal origin. Required for normal skeleton formation during embryonic development. Required for normal skin morphogenesis during embryonic development. Plays an important role in wound healing, in angiogenesis and blood vessel development. The polypeptide is Platelet-derived growth factor C (PDGFC) (Gekko japonicus (Schlegel's Japanese gecko)).